The sequence spans 180 residues: Oligoribonuclease (180 aa).

Positions 7–170 constitute an Exonuclease domain; it reads LIWIDLEMTG…SDIQDSIDEL (164 aa). Residue tyrosine 128 is part of the active site.

The protein belongs to the oligoribonuclease family.

It localises to the cytoplasm. Its function is as follows. 3'-to-5' exoribonuclease specific for small oligoribonucleotides. This chain is Oligoribonuclease, found in Ruthia magnifica subsp. Calyptogena magnifica.